The sequence spans 177 residues: Flavodoxin (177 aa).

The Flavodoxin-like domain maps to 4-173; the sequence is IGIFFGSDTG…RIDSWLEKLK (170 aa).

It belongs to the flavodoxin family. It depends on FMN as a cofactor.

Low-potential electron donor to a number of redox enzymes. NifF is the electron donor to nitrogenase. The protein is Flavodoxin (nifF) of Enterobacter agglomerans (Erwinia herbicola).